The sequence spans 157 residues: Putative dehydration-responsive element-binding protein 2H (157 aa).

The Nuclear localization signal signature appears at 5–21 (RKSRGTRDVAEILRKWR). The interval 29–57 (ADSCIDGGGSKPIRKAPPKRSRKGCMKGK) is disordered. The span at 40-54 (PIRKAPPKRSRKGCM) shows a compositional bias: basic residues. A DNA-binding region (AP2/ERF) is located at residues 66–123 (DYTGVRQRTWGKWVAEIREPGRGAKLWLGTFSSSYEAALAYDEASKAIYGQSARLNLP).

It belongs to the AP2/ERF transcription factor family. ERF subfamily.

It is found in the nucleus. Functionally, putative transcriptional activator that binds specifically to the DNA sequence 5'-[AG]CCGAC-3'. The polypeptide is Putative dehydration-responsive element-binding protein 2H (DREB2H) (Arabidopsis thaliana (Mouse-ear cress)).